The sequence spans 101 residues: Large ribosomal subunit protein uL24 (101 aa).

The protein belongs to the universal ribosomal protein uL24 family. In terms of assembly, part of the 50S ribosomal subunit.

Functionally, one of two assembly initiator proteins, it binds directly to the 5'-end of the 23S rRNA, where it nucleates assembly of the 50S subunit. One of the proteins that surrounds the polypeptide exit tunnel on the outside of the subunit. The protein is Large ribosomal subunit protein uL24 of Streptococcus agalactiae serotype III (strain NEM316).